The sequence spans 405 residues: Acetylornithine/succinyldiaminopimelate aminotransferase (405 aa).

Pyridoxal 5'-phosphate-binding positions include Gly108 to Thr109 and Phe141. Position 144 (Arg144) interacts with N(2)-acetyl-L-ornithine. A pyridoxal 5'-phosphate-binding site is contributed by Asp226 to Gln229. Lys255 carries the N6-(pyridoxal phosphate)lysine modification. A N(2)-acetyl-L-ornithine-binding site is contributed by Ser283. Residue Thr284 participates in pyridoxal 5'-phosphate binding.

The protein belongs to the class-III pyridoxal-phosphate-dependent aminotransferase family. ArgD subfamily. In terms of assembly, homodimer. Requires pyridoxal 5'-phosphate as cofactor.

It localises to the cytoplasm. The catalysed reaction is N(2)-acetyl-L-ornithine + 2-oxoglutarate = N-acetyl-L-glutamate 5-semialdehyde + L-glutamate. The enzyme catalyses N-succinyl-(2S,6S)-2,6-diaminopimelate + 2-oxoglutarate = (S)-2-succinylamino-6-oxoheptanedioate + L-glutamate. It participates in amino-acid biosynthesis; L-arginine biosynthesis; N(2)-acetyl-L-ornithine from L-glutamate: step 4/4. Its pathway is amino-acid biosynthesis; L-lysine biosynthesis via DAP pathway; LL-2,6-diaminopimelate from (S)-tetrahydrodipicolinate (succinylase route): step 2/3. With respect to regulation, inhibited by gabaculine (Gcn). In terms of biological role, involved in both the arginine and lysine biosynthetic pathways. The protein is Acetylornithine/succinyldiaminopimelate aminotransferase of Salmonella typhimurium (strain LT2 / SGSC1412 / ATCC 700720).